Consider the following 220-residue polypeptide: UPF0502 protein Pnap_3223 (220 aa).

This sequence belongs to the UPF0502 family.

This Polaromonas naphthalenivorans (strain CJ2) protein is UPF0502 protein Pnap_3223.